A 39-amino-acid chain; its full sequence is MFAEGRIPLWLVATIAGLGVIAVLGLFFYGAYAGLGSSM.

Residues 7-27 form a helical membrane-spanning segment; sequence IPLWLVATIAGLGVIAVLGLF.

It belongs to the PsbJ family. In terms of assembly, PSII is composed of 1 copy each of membrane proteins PsbA, PsbB, PsbC, PsbD, PsbE, PsbF, PsbH, PsbI, PsbJ, PsbK, PsbL, PsbM, PsbT, PsbX, PsbY, PsbZ, Psb30/Ycf12, peripheral proteins PsbO, CyanoQ (PsbQ), PsbU, PsbV and a large number of cofactors. It forms dimeric complexes.

It is found in the cellular thylakoid membrane. In terms of biological role, one of the components of the core complex of photosystem II (PSII). PSII is a light-driven water:plastoquinone oxidoreductase that uses light energy to abstract electrons from H(2)O, generating O(2) and a proton gradient subsequently used for ATP formation. It consists of a core antenna complex that captures photons, and an electron transfer chain that converts photonic excitation into a charge separation. The sequence is that of Photosystem II reaction center protein J from Microcystis aeruginosa (strain NIES-843 / IAM M-2473).